We begin with the raw amino-acid sequence, 65 residues long: Venom protein Vn4.6 (65 aa).

An N-terminal signal peptide occupies residues 1–23 (MSKIILAIFLIVLCGLIFVTVDA).

In terms of processing, contains 2 disulfide bonds. In terms of tissue distribution, expressed by the venom gland.

It is found in the secreted. Endoparasitoid venom protein that interferes with the activation of host hemolymph prophenoloxidase. May act in conjunction with other venom proteins (such as Vn50), by competitive binding to the zymogen and thereby interrupting the enzyme. In Cotesia rubecula (Cabbage white butterfly parasite), this protein is Venom protein Vn4.6.